Reading from the N-terminus, the 453-residue chain is Tryptophan dimethylallyltransferase cnsF (453 aa).

Residues 84-85 (IL) and glutamate 93 contribute to the L-tryptophan site. 3 residues coordinate substrate: arginine 104, lysine 190, and tyrosine 192. 2 residues coordinate L-tryptophan: tyrosine 194 and arginine 248. Arginine 261, lysine 263, tyrosine 265, glutamine 347, and tyrosine 349 together coordinate substrate.

Belongs to the tryptophan dimethylallyltransferase family. In terms of assembly, homodimer.

It catalyses the reaction L-tryptophan + dimethylallyl diphosphate = 4-(3-methylbut-2-enyl)-L-tryptophan + diphosphate. It functions in the pathway alkaloid biosynthesis. Tryptophan dimethylallyltransferase; part of the gene cluster that mediates the biosynthesis of communesins, a prominent class of indole alkaloids with great potential as pharmaceuticals. Communesins are biosynthesized by the coupling of tryptamine and aurantioclavine, two building blocks derived from L-tryptophan. The L-tryptophan decarboxylase cnsB converts L-tryptophan to tryptamine, whereas the tryptophan dimethylallyltransferase cnsF converts L-tryptophan to 4-dimethylallyl tryptophan which is further transformed to aurantioclavine by the aurantioclavine synthase cnsA, probably aided by the catalase cnsD. The cytochrome P450 monooxygenase cnsC catalyzes the heterodimeric coupling between the two different indole moieties, tryptamine and aurantioclavine, to construct vicinal quaternary stereocenters and yield the heptacyclic communesin scaffold. The O-methyltransferase cnsE then methylates the communesin scaffold to produce communesin K, the simplest characterized communesin that contains the heptacyclic core. The dioxygenase cnsJ converts communesin K into communesin I. Acylation to introduce the hexadienyl group at position N16 of communesin I by the acyltransferase cnsK leads to the production of communesin B. The hexadienyl group is produced by the highly reducing polyketide synthase cnsI, before being hydrolytically removed from cnsI by the serine hydrolase cnsH, converted into hexadienyl-CoA by the CoA ligase cnsG, and then transferred to communesin I by cnsK. Surprisingly, cnsK may also be a promiscuous acyltransferase that can tolerate a range of acyl groups, including acetyl-, propionyl-, and butyryl-CoA, which lead to communesins A, G and H respectively. The roles of the alpha-ketoglutarate-dependent dioxygenases cnsM and cnsP have still to be determined. In Penicillium expansum (Blue mold rot fungus), this protein is Tryptophan dimethylallyltransferase cnsF.